The chain runs to 118 residues: Small ribosomal subunit protein uS13 (118 aa).

A disordered region spans residues 94–118; the sequence is SLPVHGQRTKTNARTCKGPRKPIKK.

The protein belongs to the universal ribosomal protein uS13 family. Part of the 30S ribosomal subunit. Forms a loose heterodimer with protein S19. Forms two bridges to the 50S subunit in the 70S ribosome.

Located at the top of the head of the 30S subunit, it contacts several helices of the 16S rRNA. In the 70S ribosome it contacts the 23S rRNA (bridge B1a) and protein L5 of the 50S subunit (bridge B1b), connecting the 2 subunits; these bridges are implicated in subunit movement. Contacts the tRNAs in the A and P-sites. In Buchnera aphidicola subsp. Acyrthosiphon pisum (strain 5A), this protein is Small ribosomal subunit protein uS13.